The following is a 485-amino-acid chain: NADH-quinone oxidoreductase subunit N (485 aa).

14 helical membrane passes run Leu8–Ile28, Phe35–Val55, Phe75–Leu95, Phe105–Leu125, Ser127–Phe147, Tyr159–Ala179, Leu203–Phe223, Pro235–Met255, Ile271–Gln291, Leu297–Gln317, Val326–Leu346, Ala374–Gly394, Leu407–Leu426, and Ala449–Leu469.

The protein belongs to the complex I subunit 2 family. NDH-1 is composed of 13 different subunits. Subunits NuoA, H, J, K, L, M, N constitute the membrane sector of the complex.

The protein resides in the cell inner membrane. It carries out the reaction a quinone + NADH + 5 H(+)(in) = a quinol + NAD(+) + 4 H(+)(out). Its function is as follows. NDH-1 shuttles electrons from NADH, via FMN and iron-sulfur (Fe-S) centers, to quinones in the respiratory chain. The immediate electron acceptor for the enzyme in this species is believed to be ubiquinone. Couples the redox reaction to proton translocation (for every two electrons transferred, four hydrogen ions are translocated across the cytoplasmic membrane), and thus conserves the redox energy in a proton gradient. In Pectobacterium carotovorum subsp. carotovorum (strain PC1), this protein is NADH-quinone oxidoreductase subunit N.